Reading from the N-terminus, the 69-residue chain is Toxin CSTX-11 (69 aa).

Disulfide bonds link Cys6–Cys21, Cys13–Cys30, Cys20–Cys47, and Cys32–Cys45.

As to expression, expressed by the venom gland.

It is found in the secreted. The protein resides in the target cell membrane. In terms of biological role, spider venom toxin that shows calcium channel blocking activity and exhibits cytolytic activity by affecting the outer leaflet curvature and/or pore formation across the membrane. It blocks L-type calcium channels (Cav1/CACNA1) in mammalian neurons at nanomolar concentrations. Furthermore, it produces a slow voltage-independent block of mid/low and high voltage-activated calcium channels in cockroach neurons. Potassium ions, histamine, M-ctenitoxin-Cs1a (AC P83619), CSTX-9 (AC P58604), and CSTX-13 (AC P83919) synergistically increase the insecticidal activity of this toxin. In vivo, it causes paralysis in blow flies and provokes death in drosophila. The chain is Toxin CSTX-11 from Cupiennius salei (American wandering spider).